Here is a 169-residue protein sequence, read N- to C-terminus: Crossover junction endodeoxyribonuclease RuvC (169 aa).

Catalysis depends on residues Asp11, Glu71, and Asp143. 3 residues coordinate Mg(2+): Asp11, Glu71, and Asp143.

The protein belongs to the RuvC family. In terms of assembly, homodimer which binds Holliday junction (HJ) DNA. The HJ becomes 2-fold symmetrical on binding to RuvC with unstacked arms; it has a different conformation from HJ DNA in complex with RuvA. In the full resolvosome a probable DNA-RuvA(4)-RuvB(12)-RuvC(2) complex forms which resolves the HJ. Mg(2+) serves as cofactor.

It is found in the cytoplasm. It carries out the reaction Endonucleolytic cleavage at a junction such as a reciprocal single-stranded crossover between two homologous DNA duplexes (Holliday junction).. In terms of biological role, the RuvA-RuvB-RuvC complex processes Holliday junction (HJ) DNA during genetic recombination and DNA repair. Endonuclease that resolves HJ intermediates. Cleaves cruciform DNA by making single-stranded nicks across the HJ at symmetrical positions within the homologous arms, yielding a 5'-phosphate and a 3'-hydroxyl group; requires a central core of homology in the junction. The consensus cleavage sequence is 5'-(A/T)TT(C/G)-3'. Cleavage occurs on the 3'-side of the TT dinucleotide at the point of strand exchange. HJ branch migration catalyzed by RuvA-RuvB allows RuvC to scan DNA until it finds its consensus sequence, where it cleaves and resolves the cruciform DNA. The polypeptide is Crossover junction endodeoxyribonuclease RuvC (Bartonella quintana (strain Toulouse) (Rochalimaea quintana)).